Here is a 597-residue protein sequence, read N- to C-terminus: Elongation factor 4 (597 aa).

Residues 2-184 enclose the tr-type G domain; the sequence is NNIRNFSIIA…ALIAKVPPPK (183 aa). GTP-binding positions include 14-19 and 131-134; these read DHGKST and NKID.

The protein belongs to the TRAFAC class translation factor GTPase superfamily. Classic translation factor GTPase family. LepA subfamily.

The protein localises to the cell inner membrane. It carries out the reaction GTP + H2O = GDP + phosphate + H(+). In terms of biological role, required for accurate and efficient protein synthesis under certain stress conditions. May act as a fidelity factor of the translation reaction, by catalyzing a one-codon backward translocation of tRNAs on improperly translocated ribosomes. Back-translocation proceeds from a post-translocation (POST) complex to a pre-translocation (PRE) complex, thus giving elongation factor G a second chance to translocate the tRNAs correctly. Binds to ribosomes in a GTP-dependent manner. In Herminiimonas arsenicoxydans, this protein is Elongation factor 4.